Reading from the N-terminus, the 81-residue chain is Cytochrome b559 subunit alpha (81 aa).

Residues 22–36 (VIHSITIPSLFIAGW) traverse the membrane as a helical segment. Histidine 24 serves as a coordination point for heme.

It belongs to the PsbE/PsbF family. As to quaternary structure, heterodimer of an alpha subunit and a beta subunit. PSII is composed of 1 copy each of membrane proteins PsbA, PsbB, PsbC, PsbD, PsbE, PsbF, PsbH, PsbI, PsbJ, PsbK, PsbL, PsbM, PsbT, PsbX, PsbY, PsbZ, Psb30/Ycf12, at least 3 peripheral proteins of the oxygen-evolving complex and a large number of cofactors. It forms dimeric complexes. The cofactor is heme b.

It is found in the plastid. The protein localises to the chloroplast thylakoid membrane. In terms of biological role, this b-type cytochrome is tightly associated with the reaction center of photosystem II (PSII). PSII is a light-driven water:plastoquinone oxidoreductase that uses light energy to abstract electrons from H(2)O, generating O(2) and a proton gradient subsequently used for ATP formation. It consists of a core antenna complex that captures photons, and an electron transfer chain that converts photonic excitation into a charge separation. The chain is Cytochrome b559 subunit alpha from Cyanidioschyzon merolae (strain NIES-3377 / 10D) (Unicellular red alga).